A 417-amino-acid chain; its full sequence is Dibenzothiophene monooxygenase (417 aa).

The helical N-terminus stretch occupies residues 18-124 (NDPVAVARGL…HLYTQIAQNN (107 aa)). FMN is bound by residues tyrosine 96, 129-134 (NASSEN), 159-163 (KHFCS), arginine 282, 369-370 (AR), and histidine 391. The central beta-barrel N-terminus stretch occupies residues 125–233 (WWTGNASSEN…KVEPDEVLGA (109 aa)). Residues 131-142 (SSENNSHVLDWK) form a lid loop region. Residues 234 to 417 (PNAFVLAFIQ…GQYPIPGFTS (184 aa)) form a helical C-terminus region.

It belongs to the DszC flavin monooxygenase family. Homotetramer formed by a dimer of dimers; FMN binds between monomers of the homodimer.

The protein localises to the cytoplasm. It catalyses the reaction dibenzothiophene + 2 FMNH2 + 2 O2 = dibenzothiophene 5,5-dioxide + 2 FMN + 2 H2O + 2 H(+). It carries out the reaction dibenzothiophene + FMNH2 + O2 = dibenzothiophene 5-oxide + FMN + H2O + H(+). The enzyme catalyses dibenzothiophene 5-oxide + FMNH2 + O2 = dibenzothiophene 5,5-dioxide + FMN + H2O + H(+). Its pathway is sulfur metabolism; dibenzothiophene degradation. DBT degradation completely inhibited by Cu(2+), Mn(2+), p-chloromercuribenzoic acid, 2,2-bipyridyl, 1,10-phenanthroline, and strongly inhibited by Zn(2+), 5,5'- Dithiobis(2-nitrobenzoic acid) and 8-quinolinol. Functionally, catalyzes the first step of the '4S' desulfurization pathway that removes covalently bound sulfur from dibenzothiophene (DBT) without breaking carbon-carbon bonds. Sulfur dioxygenase which converts DBT to DBT-sulfone (DBTO2 or DBT 5,5-dioxide) in a stepwise manner. Also acts on thioxanthen-9-one and 4,6-dimethyl DBT and 2,8-dimethyl DBT. The polypeptide is Dibenzothiophene monooxygenase (Rhodococcus erythropolis (Arthrobacter picolinophilus)).